The primary structure comprises 303 residues: 5'-3' exonuclease (303 aa).

Positions 179 to 262 constitute a 5'-3' exonuclease domain; the sequence is ISPAQWVDVK…LATITTEIEA (84 aa).

5'-3' exonuclease acting preferentially on double-stranded DNA. The protein is 5'-3' exonuclease of Halalkalibacterium halodurans (strain ATCC BAA-125 / DSM 18197 / FERM 7344 / JCM 9153 / C-125) (Bacillus halodurans).